Consider the following 231-residue polypeptide: Adenosylcobinamide-GDP ribazoletransferase (231 aa).

Helical transmembrane passes span 24-44 (LWAFPLVALVSSALPTLILYL), 46-66 (LPLSNLLAVLALYWTIGLLHL), 96-116 (IAGLFAVVIVLLLQVYSLQLL), 159-176 (LALGTLLYVLLGLSVVLF), 181-198 (LAGILGLLFGVHIIRISL), and 209-229 (LGATAEITRAGTLVVMALVWW).

Belongs to the CobS family. Requires Mg(2+) as cofactor.

It is found in the cell membrane. The enzyme catalyses alpha-ribazole + adenosylcob(III)inamide-GDP = adenosylcob(III)alamin + GMP + H(+). The catalysed reaction is alpha-ribazole 5'-phosphate + adenosylcob(III)inamide-GDP = adenosylcob(III)alamin 5'-phosphate + GMP + H(+). It participates in cofactor biosynthesis; adenosylcobalamin biosynthesis; adenosylcobalamin from cob(II)yrinate a,c-diamide: step 7/7. Functionally, joins adenosylcobinamide-GDP and alpha-ribazole to generate adenosylcobalamin (Ado-cobalamin). Also synthesizes adenosylcobalamin 5'-phosphate from adenosylcobinamide-GDP and alpha-ribazole 5'-phosphate. This Thermococcus kodakarensis (strain ATCC BAA-918 / JCM 12380 / KOD1) (Pyrococcus kodakaraensis (strain KOD1)) protein is Adenosylcobinamide-GDP ribazoletransferase.